Here is a 246-residue protein sequence, read N- to C-terminus: MLYLHDIWVNWFEGEENGYNVCHFHEWRKDDQIELLDQVPLLKVSPALFHYIENSLSDLPKPLLDDVHQKAYVRKNHERIQLDYCFVVTDGAGVLAVDTIGYQIPIRKSRLIPRQEQLVYEMAAEAEERDYPLPRYEKEYHILSPAPELMCGLTRKERQLKQLLFMALDQLYSTKNTAQMRYWYTEWAPEKYAAIQKMSFDEAWEQLYNETKYGWSERHEQLCENLIKGQPFFEKLWEMEQEPKVN.

The protein belongs to the UPF0736 family.

In Geobacillus kaustophilus (strain HTA426), this protein is UPF0736 protein GK0808.